Reading from the N-terminus, the 389-residue chain is Innexin-6 (389 aa).

4 consecutive transmembrane segments (helical) span residues 36-56, 111-131, 190-210, and 276-296; these read VVIL…GDPI, VFAL…AMIA, LFYT…FYIL, and LFIF…VNCF.

Belongs to the pannexin family.

The protein localises to the cell membrane. The protein resides in the cell junction. It is found in the gap junction. Structural component of the gap junctions. In Caenorhabditis elegans, this protein is Innexin-6 (inx-6).